Here is a 213-residue protein sequence, read N- to C-terminus: Motile sperm domain-containing protein 1 (213 aa).

The MSP domain maps to 16–143 (PVFVFPTELI…KEHLTESVFF (128 aa)). 2 consecutive transmembrane segments (helical) span residues 159-179 (SLLTVFLGVVCIAALMLPTLG) and 191-211 (LSVNQKLVAAYILGLITMAIL). The short motif at 205-208 (LITM) is the Nuclear export signal element.

The protein resides in the endoplasmic reticulum membrane. It is found in the golgi apparatus membrane. Its function is as follows. Plays a role in differentiation and/or proliferation of mesenchymal stem cells. Proposed to be involved in epithelial-to-mesenchymal transition (EMT). However, another study suggests that it is not required for EMT or stem cell self-renewal and acts during later stages of differentiation. The chain is Motile sperm domain-containing protein 1 (Mospd1) from Rattus norvegicus (Rat).